A 137-amino-acid chain; its full sequence is NADH dehydrogenase [ubiquinone] 1 beta subcomplex subunit 7 (137 aa).

Gly2 carries N-myristoyl glycine lipidation. The CHCH domain occupies 56–98 (RDYCAHYLIRLLKCKRDSFPNFXACKQERHDWDYCEHRDYVMR). The Cx9C motif 1 motif lies at 59–69 (CAHYLIRLLKC). Disulfide bonds link Cys59–Cys90 and Cys69–Cys80. Residue Ser73 is modified to Phosphoserine. Residues 80 to 90 (CKQERHDWDYC) carry the Cx9C motif 2 motif. The disordered stretch occupies residues 113–137 (KRREKKAAELAKGQGPGEVDPKVAL).

This sequence belongs to the complex I NDUFB7 subunit family. As to quaternary structure, complex I is composed of 45 different subunits.

Its subcellular location is the mitochondrion inner membrane. The protein resides in the mitochondrion intermembrane space. Functionally, accessory subunit of the mitochondrial membrane respiratory chain NADH dehydrogenase (Complex I), that is believed not to be involved in catalysis. Complex I functions in the transfer of electrons from NADH to the respiratory chain. The immediate electron acceptor for the enzyme is believed to be ubiquinone. The polypeptide is NADH dehydrogenase [ubiquinone] 1 beta subcomplex subunit 7 (NDUFB7) (Pan troglodytes (Chimpanzee)).